The sequence spans 456 residues: MTLYEFFLNQKLVYQSSPHFNGVFLTILEHYGFQFKTIDKLWKSKLLITSELTDKIKQQLKCYFIEKIPLPYLLGTIQLRKLTFKTKKGVFIPRIDSLALIASVNLKKIKTALDLCCGSGTLAIALKKKCDTLDVYGSDIDIQALKLAQQNALINNVSINWIEADWFDCFNKIKTPIDLIVTNPPYLKKTQLNKTLNYEPKHSLVFQNKNSYFAYKQLFNLLLTKRSIKQLIFECSLFQKERLLNLFSIFKSRPIFNFQKQFIGMKVDNQKLPVVDIKNTKTIKQLLKMGLAGIVNTDTQMGLISYSESTLDKIKQRALNKHYVSMFGLEELKKLPKKLQQIASYFWPGSYTFIKNNKSYRVPKNLGLLNLFNAIGRVFCTSANISNQKPYTKLSDYQNDSYWIKQPCFIIRSTSKVQSNNTPSLVYNLDTKQLVRTTAKQTKQFHKLITKHQLAI.

Residues 277-440 (IKNTKTIKQL…TKQLVRTTAK (164 aa)) enclose the YrdC-like domain.

This is an uncharacterized protein from Mycoplasma genitalium (strain ATCC 33530 / DSM 19775 / NCTC 10195 / G37) (Mycoplasmoides genitalium).